The chain runs to 356 residues: Histidinol-phosphate aminotransferase (356 aa).

Residue K214 is modified to N6-(pyridoxal phosphate)lysine.

Belongs to the class-II pyridoxal-phosphate-dependent aminotransferase family. Histidinol-phosphate aminotransferase subfamily. In terms of assembly, homodimer. Pyridoxal 5'-phosphate serves as cofactor.

It carries out the reaction L-histidinol phosphate + 2-oxoglutarate = 3-(imidazol-4-yl)-2-oxopropyl phosphate + L-glutamate. It functions in the pathway amino-acid biosynthesis; L-histidine biosynthesis; L-histidine from 5-phospho-alpha-D-ribose 1-diphosphate: step 7/9. This chain is Histidinol-phosphate aminotransferase, found in Escherichia coli (strain SMS-3-5 / SECEC).